The following is a 186-amino-acid chain: MLDTANYTPRLKAAFSETIKAAMKEEFGYKNDMQIPRLEKIVLNIGSGAESVRDTKKAKSAQEDLTAIAGQHAVVTKAKKSIAGFRLREEHPVGAKVTLRGDRMYDFLDRLTTIAMPRIRDFRGVKPSFDGRGNFAMGMKEHIVFPEINFDKIDVAWGMDIIIVTTANTDAEAKSLLAHFNMPFNA.

The protein belongs to the universal ribosomal protein uL5 family. In terms of assembly, part of the 50S ribosomal subunit; part of the 5S rRNA/L5/L18/L25 subcomplex. Contacts the 5S rRNA and the P site tRNA. Forms a bridge to the 30S subunit in the 70S ribosome.

In terms of biological role, this is one of the proteins that bind and probably mediate the attachment of the 5S RNA into the large ribosomal subunit, where it forms part of the central protuberance. In the 70S ribosome it contacts protein S13 of the 30S subunit (bridge B1b), connecting the 2 subunits; this bridge is implicated in subunit movement. Contacts the P site tRNA; the 5S rRNA and some of its associated proteins might help stabilize positioning of ribosome-bound tRNAs. The chain is Large ribosomal subunit protein uL5 from Jannaschia sp. (strain CCS1).